Reading from the N-terminus, the 124-residue chain is Large ribosomal subunit protein uL18 (124 aa).

Belongs to the universal ribosomal protein uL18 family. As to quaternary structure, part of the 50S ribosomal subunit; part of the 5S rRNA/L5/L18/L25 subcomplex. Contacts the 5S and 23S rRNAs.

This is one of the proteins that bind and probably mediate the attachment of the 5S RNA into the large ribosomal subunit, where it forms part of the central protuberance. The polypeptide is Large ribosomal subunit protein uL18 (Aquifex aeolicus (strain VF5)).